The sequence spans 192 residues: Fe/S biogenesis protein NfuA (192 aa).

[4Fe-4S] cluster-binding residues include Cys149 and Cys152.

It belongs to the NfuA family. In terms of assembly, homodimer. [4Fe-4S] cluster serves as cofactor.

Functionally, involved in iron-sulfur cluster biogenesis. Binds a 4Fe-4S cluster, can transfer this cluster to apoproteins, and thereby intervenes in the maturation of Fe/S proteins. Could also act as a scaffold/chaperone for damaged Fe/S proteins. The sequence is that of Fe/S biogenesis protein NfuA from Shewanella oneidensis (strain ATCC 700550 / JCM 31522 / CIP 106686 / LMG 19005 / NCIMB 14063 / MR-1).